The following is a 152-amino-acid chain: Transcriptional regulator MraZ (152 aa).

SpoVT-AbrB domains lie at 5-52 (ATMV…TLPA) and 81-124 (ASEC…DEQT).

The protein belongs to the MraZ family. As to quaternary structure, forms oligomers.

It localises to the cytoplasm. It is found in the nucleoid. Negatively regulates its own expression and that of the subsequent genes in the proximal part of the division and cell wall (dcw) gene cluster. Acts by binding directly to DNA. May also regulate the expression of genes outside the dcw cluster. This is Transcriptional regulator MraZ from Yersinia enterocolitica serotype O:8 / biotype 1B (strain NCTC 13174 / 8081).